A 185-amino-acid chain; its full sequence is MKTAQELRVGNVFMLGRDPMVVLKTEFTKSGRNSSVVKMKYKNLLTESPGEAVYKADDKFDIVVLEKKEVSYSYYASPMYVFMDAEFNQYEVEEETMSDVLSFLEDGMPCEVVFYNDKPISVEMPNSVVREIIYTEPAVKGDTSGKVMKSAKIVTGFELPVPLFCEIGDKIEIDTRTREYRSRVK.

Belongs to the elongation factor P family.

The protein localises to the cytoplasm. It functions in the pathway protein biosynthesis; polypeptide chain elongation. Its function is as follows. Involved in peptide bond synthesis. Stimulates efficient translation and peptide-bond synthesis on native or reconstituted 70S ribosomes in vitro. Probably functions indirectly by altering the affinity of the ribosome for aminoacyl-tRNA, thus increasing their reactivity as acceptors for peptidyl transferase. The polypeptide is Elongation factor P (Nitrosomonas eutropha (strain DSM 101675 / C91 / Nm57)).